The sequence spans 132 residues: Large ribosomal subunit protein bL19 (132 aa).

The protein belongs to the bacterial ribosomal protein bL19 family.

In terms of biological role, this protein is located at the 30S-50S ribosomal subunit interface and may play a role in the structure and function of the aminoacyl-tRNA binding site. This Persephonella marina (strain DSM 14350 / EX-H1) protein is Large ribosomal subunit protein bL19.